Consider the following 205-residue polypeptide: High frequency lysogenization protein HflD homolog (205 aa).

The protein belongs to the HflD family.

It localises to the cytoplasm. Its subcellular location is the cell inner membrane. The polypeptide is High frequency lysogenization protein HflD homolog (Shewanella sp. (strain W3-18-1)).